The primary structure comprises 461 residues: Transcriptional activator RocR (461 aa).

Aspartate 57 carries the 4-aspartylphosphate modification. One can recognise a Sigma-54 factor interaction domain in the interval 143–372; that stretch reads ILGTSPAIQD…EHMIEGAMNF (230 aa). ATP is bound by residues 171–178 and 233–242; these read GETGTGKE and AHGGTLLLDE. Positions 434–453 form a DNA-binding region, H-T-H motif; that stretch reads ISKAAQELGISRQSLQYRLK.

Its function is as follows. Positive regulator of arginine catabolism. Controls the transcription of the two operons rocABC and rocDEF and probably acts by binding to the corresponding upstream activating sequences. The chain is Transcriptional activator RocR (rocR) from Bacillus subtilis (strain 168).